The chain runs to 134 residues: Large ribosomal subunit protein bL17 (134 aa).

The protein belongs to the bacterial ribosomal protein bL17 family. Part of the 50S ribosomal subunit. Contacts protein L32.

This chain is Large ribosomal subunit protein bL17, found in Colwellia psychrerythraea (strain 34H / ATCC BAA-681) (Vibrio psychroerythus).